Here is a 208-residue protein sequence, read N- to C-terminus: Uracil phosphoribosyltransferase (208 aa).

Residues arginine 77, arginine 102, and 128-136 (DPMLATGGT) contribute to the 5-phospho-alpha-D-ribose 1-diphosphate site. Residues isoleucine 191 and 196 to 198 (GDI) each bind uracil. A 5-phospho-alpha-D-ribose 1-diphosphate-binding site is contributed by aspartate 197.

Belongs to the UPRTase family. The cofactor is Mg(2+).

The catalysed reaction is UMP + diphosphate = 5-phospho-alpha-D-ribose 1-diphosphate + uracil. It functions in the pathway pyrimidine metabolism; UMP biosynthesis via salvage pathway; UMP from uracil: step 1/1. With respect to regulation, allosterically activated by GTP. Its function is as follows. Catalyzes the conversion of uracil and 5-phospho-alpha-D-ribose 1-diphosphate (PRPP) to UMP and diphosphate. The chain is Uracil phosphoribosyltransferase from Aquifex aeolicus (strain VF5).